A 294-amino-acid chain; its full sequence is uncharacterized protein (294 aa).

Residues T43 and Y104 each act as charge relay system in the active site. Y130 (proton donor) is an active-site residue. The active-site Schiff-base intermediate with substrate is K158.

Belongs to the DapA family. As to quaternary structure, homotetramer.

The protein localises to the cytoplasm. This is an uncharacterized protein from Pyrococcus abyssi (strain GE5 / Orsay).